The chain runs to 1863 residues: Breast cancer type 1 susceptibility protein homolog (1863 aa).

Met-1 is subject to N-acetylmethionine. An RING-type zinc finger spans residues Cys-24 to Lys-65. Lys-109 participates in a covalent cross-link: Glycyl lysine isopeptide (Lys-Gly) (interchain with G-Cter in SUMO2). Ser-114 carries the phosphoserine modification. The segment at Glu-230–Ser-267 is disordered. Residues Thr-248–Lys-260 are compositionally biased toward basic and acidic residues. A Glycyl lysine isopeptide (Lys-Gly) (interchain with G-Cter in SUMO2) cross-link involves residue Lys-301. A disordered region spans residues Asn-306 to Lys-338. A compositionally biased stretch (basic and acidic residues) spans Thr-327 to Lys-338. Lys-339 participates in a covalent cross-link: Glycyl lysine isopeptide (Lys-Gly) (interchain with G-Cter in SUMO2). Residues Ser-395, Ser-398, Ser-423, and Ser-434 each carry the phosphoserine modification. Residues Lys-443, Lys-459, and Lys-519 each participate in a glycyl lysine isopeptide (Lys-Gly) (interchain with G-Cter in SUMO2) cross-link. Residue Ser-551 is modified to Phosphoserine. Glycyl lysine isopeptide (Lys-Gly) (interchain with G-Cter in SUMO2) cross-links involve residues Lys-583 and Lys-654. A disordered region spans residues Ile-650–Lys-739. 3 positions are modified to phosphoserine: Ser-694, Ser-708, and Ser-725. Residues Ala-705–Ser-716 show a composition bias toward polar residues. Residues Pro-727–Thr-737 are compositionally biased toward basic and acidic residues. Residues Lys-734 and Lys-739 each participate in a glycyl lysine isopeptide (Lys-Gly) (interchain with G-Cter in SUMO2) cross-link. Phosphoserine occurs at positions 753 and 840. Residues Ser-896–Ser-915 form a disordered region. The segment covering Thr-900 to Asn-909 has biased composition (basic and acidic residues). Residues Lys-918 and Lys-987 each participate in a glycyl lysine isopeptide (Lys-Gly) (interchain with G-Cter in SUMO2) cross-link. Residue Ser-988 is modified to Phosphoserine; by CHEK2. A Phosphoserine modification is found at Ser-1009. Lys-1079 is covalently cross-linked (Glycyl lysine isopeptide (Lys-Gly) (interchain with G-Cter in SUMO2)). Ser-1143, Ser-1189, Ser-1191, Ser-1211, Ser-1217, Ser-1218, Ser-1280, Ser-1328, Ser-1336, Ser-1342, and Ser-1387 each carry phosphoserine. The tract at residues Val-1181–Leu-1216 is disordered. A disordered region spans residues Lys-1322–Gln-1395. Polar residues predominate over residues Glu-1373 to Gln-1395. Thr-1394 is modified (phosphothreonine). Residues Arg-1397 to Gln-1424 are interaction with PALB2. A phosphoserine mark is found at Ser-1423, Ser-1457, Ser-1524, and Ser-1542. The disordered stretch occupies residues Glu-1440 to Asp-1505. The span at Asn-1444–Glu-1470 shows a compositional bias: polar residues. The tract at residues Glu-1565–Ser-1642 is disordered. A compositionally biased stretch (polar residues) spans Ser-1610–Gly-1624. BRCT domains are found at residues Ser-1642–Val-1736 and Gln-1756–Ile-1855.

In terms of assembly, heterodimer with BARD1. Part of the BRCA1-associated genome surveillance complex (BASC), which contains BRCA1, MSH2, MSH6, MLH1, ATM, BLM, PMS2 and the MRE11-RAD50-NBN protein (MRN) complex. This association could be a dynamic process changing throughout the cell cycle and within subnuclear domains. Component of the BRCA1-A complex, at least composed of BRCA1, BARD1, UIMC1/RAP80, ABRAXAS1, BRCC3/BRCC36, BABAM2 and BABAM1/NBA1. Interacts (via the BRCT domains) with ABRAXAS1 (phosphorylated form); this is important for recruitment to sites of DNA damage. Can form a heterotetramer with two molecules of ABRAXAS1 (phosphorylated form). Component of the BRCA1-RBBP8 complex. Interacts (via the BRCT domains) with RBBP8 ('Ser-327' phosphorylated form); the interaction ubiquitinates RBBP8, regulates CHEK1 activation, and involves RBBP8 in BRCA1-dependent G2/M checkpoint control on DNA damage. Associates with RNA polymerase II holoenzyme. Interacts with SMC1A, NELFB, DCLRE1C, CLSPN. CHEK1, CHEK2, BAP1, BRCC3, UBXN1 and PCLAF. Interacts (via BRCT domains) with BRIP1 (phosphorylated form). Interacts with FANCD2 (ubiquitinated form). Interacts with H2AX (phosphorylated on 'Ser-140'). Interacts (via the BRCT domains) with ACACA (phosphorylated form); the interaction prevents dephosphorylation of ACACA. Part of a BRCA complex containing BRCA1, BRCA2 and PALB2. Interacts directly with PALB2; the interaction is essential for its function in HRR. Interacts directly with BRCA2; the interaction occurs only in the presence of PALB2 which serves as the bridging protein. Interacts (via the BRCT domains) with LMO4; the interaction represses the transcriptional activity of BRCA1. Interacts (via the BRCT domains) with CCAR2 (via N-terminus); the interaction represses the transcriptional activator activity of BRCA1. Interacts with EXD2. Interacts (via C-terminus) with DHX9; this interaction is direct and links BRCA1 to the RNA polymerase II holoenzyme. Interacts with DNA helicase ZGRF1; the interaction is increased following DNA damage induction. Phosphorylated in response to IR, UV, and various stimuli that cause checkpoint activation, probably by ATM or ATR. Phosphorylation at Ser-988 by CHEK2 regulates mitotic spindle assembly. Phosphorylation by AURKA regulates centrosomal microtubule nucleation. In terms of processing, autoubiquitinated, undergoes 'Lys-6'-linked polyubiquitination. 'Lys-6'-linked polyubiquitination does not promote degradation.

The protein localises to the nucleus. It localises to the chromosome. The protein resides in the cytoplasm. The enzyme catalyses S-ubiquitinyl-[E2 ubiquitin-conjugating enzyme]-L-cysteine + [acceptor protein]-L-lysine = [E2 ubiquitin-conjugating enzyme]-L-cysteine + N(6)-ubiquitinyl-[acceptor protein]-L-lysine.. Its function is as follows. E3 ubiquitin-protein ligase that specifically mediates the formation of 'Lys-6'-linked polyubiquitin chains and plays a central role in DNA repair by facilitating cellular responses to DNA damage. It is unclear whether it also mediates the formation of other types of polyubiquitin chains. The BRCA1-BARD1 heterodimer coordinates a diverse range of cellular pathways such as DNA damage repair, ubiquitination and transcriptional regulation to maintain genomic stability. Regulates centrosomal microtubule nucleation. Required for appropriate cell cycle arrests after ionizing irradiation in both the S-phase and the G2 phase of the cell cycle. Required for FANCD2 targeting to sites of DNA damage. Inhibits lipid synthesis by binding to inactive phosphorylated ACACA and preventing its dephosphorylation. Contributes to homologous recombination repair (HRR) via its direct interaction with PALB2, fine-tunes recombinational repair partly through its modulatory role in the PALB2-dependent loading of BRCA2-RAD51 repair machinery at DNA breaks. Component of the BRCA1-RBBP8 complex which regulates CHEK1 activation and controls cell cycle G2/M checkpoints on DNA damage via BRCA1-mediated ubiquitination of RBBP8. Acts as a transcriptional activator. The chain is Breast cancer type 1 susceptibility protein homolog (BRCA1) from Pan troglodytes (Chimpanzee).